The following is a 667-amino-acid chain: MSAPLIDKYRKMATFDWKKLKAAVEGEEHVRLKSEVVAKMKSEPVFHRDYRVLSREEQREVVHQRWKKIVEWGLFKDPYSDLENFHALTETLEAYDQGTSARLFLHGNVFGAAVKSMGTDRHKDLIQKTENNEIVGAFCLTEVGHGSNTAEIQTTATFDNGELVFNTPSVSAIKCWAGNLAHSATHVVVYAQLHVEGKNEGFHGFVIQVRCPRTFQTLPGITIGDMGSKPGCWQGVENGWMEFKNHRAPLSALLNKGCDITPDGKYVTSFKSASEKQSVSLGTLSVGRLGIIAKGMMACTFASTIAIRYSVARRQFGPVKGAENEIPVLEYPLQQYRLFPYLSAAICIRIFQKKFVGHFTEYMMRVIMGEKSDELSEFSKEVHALSSGAKPVATWLGVESLGEARKACGGHGYLQMSRLNTLRDDNDPSQTFEGENFMILQQTSNILLGKAQSIGSIETPMSTMSFLNQKPSKFSSWSSNPVNDVLSAYRYLTYHLLQTTSAEAYRLKASGKNSFEVRNEIQIHRAVNLSVAYTEHTMIHWVQQFLKEIEDQSVKPVLQKVLNLFSLFLLERHLATLYITGYASGGKFGEDLREKLRLAVAELKPEAIALVDSIAPDDFILHSALGASDGKAYEHIMEEFRKYTNEQPRWVCDLAQFLQKRSQGSKL.

Residues 138-141, 146-147, G178, R313, 334-337, and G410 contribute to the FAD site; these read FCLT, GS, and QQYR. E433 (proton acceptor) is an active-site residue. E435 contacts FAD. Positions 665–667 match the Microbody targeting signal motif; the sequence is SKL.

The protein belongs to the acyl-CoA oxidase family. As to quaternary structure, homodimer. FAD serves as cofactor. Expressed in intestine.

It localises to the peroxisome. The catalysed reaction is IC-asc-C7-CoA + O2 = IC-asc-DeltaC7-CoA + H2O2. It catalyses the reaction IC-asc-C9-CoA + O2 = IC-asc-DeltaC9-CoA + H2O2. The enzyme catalyses asc-C13-CoA + O2 = asc-DeltaC13-CoA + H2O2. It participates in lipid metabolism; peroxisomal fatty acid beta-oxidation. In contrast to other acyl-coenzyme A oxidases which bind to and are activated by ATP, does not bind ATP. Functionally, involved in the first step of peroxisomal beta-oxidation by catalyzing the desaturation of fatty acid-derived side chains of ascaroside pheromones, which regulates development and behavior. Specifically, shortens indol-3-carbonyl(IC)-ascarosides with 7-carbon (IC-asc-C7) or 9-carbon (IC-asc-C9) side chains and contributes to the shortening of ascarosides with 13-carbon (asc-C13) and 15-carbon (asc-C15) side chains. The protein is Acyl-coenzyme A oxidase acox-3 of Caenorhabditis elegans.